The following is a 189-amino-acid chain: Putative ankyrin repeat protein TV1425 (189 aa).

ANK repeat units follow at residues 31 to 60 (YNRTPLMVACMLGMENAIDKLVENFDKLED), 64 to 93 (EGSTALIWAVKNNRLGIAEKLLSKGSNVNT), 97 to 126 (SGKTPLMWSIIFGYSEMSYFLLEHGANVND), and 130 to 159 (EGETPLIVASKYGRSEIVKKLLELGADISA).

The polypeptide is Putative ankyrin repeat protein TV1425 (Thermoplasma volcanium (strain ATCC 51530 / DSM 4299 / JCM 9571 / NBRC 15438 / GSS1)).